Here is a 421-residue protein sequence, read N- to C-terminus: Protein FAM110C (421 aa).

3 disordered regions span residues 1-36, 51-80, and 141-266; these read MRALPTLDSLARMRPPLGDPRAAEDTLTPRPANKSA, TLGSSRGPVSEHRVPEAPGVQHRNPIPSAL, and TTRV…PASM. Basic and acidic residues-rich tracts occupy residues 143–155, 185–202, and 232–249; these read RVADEDKTTKETE and PAEKTRVANEDKTTKETE. Position 350 is a phosphoserine (S350).

The protein belongs to the FAM110 family. In terms of assembly, interacts with AKT1; the interaction is transient and follows AKT1 activation. Interacts with PPP2CA and alpha-tubulin.

Its subcellular location is the cytoplasm. The protein localises to the cytoskeleton. It localises to the microtubule organizing center. It is found in the centrosome. The protein resides in the spindle pole. Its subcellular location is the nucleus. May play a role in microtubule organization. May play a role in cell spreading and cell migration of epithelial cells; the function may involve the AKT1 signaling pathway. The polypeptide is Protein FAM110C (Fam110c) (Mus musculus (Mouse)).